A 327-amino-acid polypeptide reads, in one-letter code: Ubiquinone biosynthesis O-methyltransferase, mitochondrial (327 aa).

The S-adenosyl-L-methionine site is built by arginine 79, glycine 142, aspartate 165, and phenylalanine 210. Glutamate 211, glutamate 214, and histidine 215 together coordinate Mg(2+).

It belongs to the class I-like SAM-binding methyltransferase superfamily. UbiG/COQ3 family. In terms of assembly, component of a multi-subunit COQ enzyme complex, composed of at least COQ3, COQ4, COQ5, COQ6, COQ7 and COQ9. It depends on Mg(2+) as a cofactor.

It localises to the mitochondrion inner membrane. It catalyses the reaction a 3,4-dihydroxy-5-(all-trans-polyprenyl)benzoate + S-adenosyl-L-methionine = a 4-hydroxy-3-methoxy-5-(all-trans-polyprenyl)benzoate + S-adenosyl-L-homocysteine + H(+). The catalysed reaction is a 3-demethylubiquinone + S-adenosyl-L-methionine = a ubiquinone + S-adenosyl-L-homocysteine. It carries out the reaction a 3-demethylubiquinol + S-adenosyl-L-methionine = a ubiquinol + S-adenosyl-L-homocysteine + H(+). The protein operates within cofactor biosynthesis; ubiquinone biosynthesis. In terms of biological role, O-methyltransferase required for two non-consecutive steps during ubiquinone biosynthesis. Catalyzes the 2 O-methylation of 3,4-dihydroxy-5-(all-trans-polyprenyl)benzoic acid into 4-hydroxy-3-methoxy-5-(all-trans-polyprenyl)benzoic acid. Also catalyzes the last step of ubiquinone biosynthesis by mediating methylation of 3-demethylubiquinone into ubiquinone. Also able to mediate the methylation of 3-demethylubiquinol into ubiquinol. The chain is Ubiquinone biosynthesis O-methyltransferase, mitochondrial from Candida albicans (Yeast).